The chain runs to 358 residues: MESADFYEAEPRPPMSSHLQSPPHAPSNAAFGFPRGAGPAPPPAPPAAPEPLGGICEHETSIDISAYIDPAAFNDEFLADLFQHSRQQEKAKAAAGPAGGGGDFDYPGAPAGPGGAVMSAGAHGPPPGYGCAAAGYLDGRLEPLYERVGAPALRPLVIKQEPREEDEAKQLALAGLFPYQPPPPPPPPHPHASPAHLAAPHLQFQIAHCGQTTMHLQPGHPTPPPTPVPSPHPAPAMGAAGLPGPGGSLKGLAGPHPDLRTGGGGGGGAGAGKAKKSVDKNSNEYRVRRERNNIAVRKSRDKAKQRNVETQQKVLELTSDNDRLRKRVEQLSRELDTLRGIFRQLPESSLVKAMGNCA.

The tract at residues 1-55 is disordered; that stretch reads MESADFYEAEPRPPMSSHLQSPPHAPSNAAFGFPRGAGPAPPPAPPAAPEPLGGI. The segment at 1–70 is required to repress E2F1:TFDP1-mediated transcription, to inhibit cell cycle and to induce adipocyte differentiation; the sequence is MESADFYEAE…SIDISAYIDP (70 aa). The segment covering 29–38 has biased composition (low complexity); sequence AAFGFPRGAG. Residues 39-49 show a composition bias toward pro residues; the sequence is PAPPPAPPAAP. The tract at residues 54–72 is required for interaction with TRIB1; the sequence is GICEHETSIDISAYIDPAA. The segment at 126–200 is required to induce adipocyte differentiation; sequence PPGYGCAAAG…HASPAHLAAP (75 aa). Lysine 159 carries the post-translational modification N6-acetyllysine; alternate. Lysine 159 participates in a covalent cross-link: Glycyl lysine isopeptide (Lys-Gly) (interchain with G-Cter in SUMO); alternate. A Glycyl lysine isopeptide (Lys-Gly) (interchain with G-Cter in SUMO2); alternate cross-link involves residue lysine 159. Disordered regions lie at residues 176–195 and 213–310; these read LFPY…ASPA and TMHL…NVET. Residues 179-191 are compositionally biased toward pro residues; sequence YQPPPPPPPPHPH. The required to functionally cooperate with SREBF1 in promoter activation stretch occupies residues 180-194; it reads QPPPPPPPPHPHASP. Residue serine 193 is modified to Phosphoserine. Over residues 220 to 234 the composition is skewed to pro residues; that stretch reads HPTPPPTPVPSPHPA. Threonine 222 and threonine 226 each carry phosphothreonine; by GSK3. Serine 230 bears the Phosphoserine; by GSK3 mark. The segment at 240–358 is interaction with FOXO1; that stretch reads AGLPGPGGSL…SLVKAMGNCA (119 aa). Residues 261-271 are compositionally biased toward gly residues; it reads TGGGGGGGAGA. Residues 276–292 show a composition bias toward basic and acidic residues; the sequence is KSVDKNSNEYRVRRERN. The bZIP domain occupies 282–345; it reads SNEYRVRRER…DTLRGIFRQL (64 aa). The DNA-binding element occupies 285-300; the sequence is YRVRRERNNIAVRKSR. Residues 286-313 are basic motif; that stretch reads RVRRERNNIAVRKSRDKAKQRNVETQQK. The leucine-zipper stretch occupies residues 317–345; sequence LTSDNDRLRKRVEQLSRELDTLRGIFRQL.

Belongs to the bZIP family. C/EBP subfamily. Binds DNA as a homodimer and as a heterodimer. Can form stable heterodimers with CEBPB, CEBPD, CEBPE and CEBPG. Can form stable homodimers (also isoform 2 and isoform 3 dimers) and heterodimers with CEBPB (with isoform 2 and isoform 3) and CEBPG. Interacts with PRDM16. Interacts with UBN1. Interacts with ZNF638; this interaction increases transcriptional activation. Interacts with the complex TFDP2:E2F1; the interaction prevents CEBPA binding to target gene promoters and represses its transcriptional activity. Interacts with RB1. Interacts (when phosphorylated at Ser-193) with CDK2, CDK4, E2F4 and SMARCA2. Interacts with SREBPF1. Interacts with FOXO1 (via the Fork-head domain); the interaction increases when FOXO1 is deacetylated. Interacts with SIX1. Interacts (via recognition sequence) with TRIB1. In terms of assembly, interacts with TAF1A and UBTF. As to quaternary structure, interacts with NPM1. Sumoylated, sumoylation blocks the inhibitory effect on cell proliferation by disrupting the interaction with SMARCA2. Post-translationally, phosphorylation at Ser-193 is required for interaction with CDK2, CDK4 and SWI/SNF complex leading to cell cycle inhibition. Dephosphorylated at Ser-193 by protein phosphatase 2A (PP2A) through PI3K/AKT signaling pathway regulation. Phosphorylation at Thr-222 and Thr-226 by GSK3 is constitutive in adipose tissue and lung. In liver, both Thr-222 and Thr-226 are phosphorylated only during feeding but not during fasting. Phosphorylation of the GSK3 consensus sites selectively decreases transactivation activity on IRE-controlled promoters. In terms of processing, ubiquitinated by COP1 upon interaction with TRIB1. In terms of tissue distribution, isoform 2 and isoform 3 are expressed in liver (at protein level).

The protein resides in the nucleus. It localises to the nucleolus. Functionally, transcription factor that coordinates proliferation arrest and the differentiation of myeloid progenitors, adipocytes, hepatocytes, and cells of the lung and the placenta. Binds directly to the consensus DNA sequence 5'-T[TG]NNGNAA[TG]-3' acting as an activator on distinct target genes. During early embryogenesis, plays essential and redundant functions with CEBPB. Essential for the transition from common myeloid progenitors (CMP) to granulocyte/monocyte progenitors (GMP). Critical for the proper development of the liver and the lung. Necessary for terminal adipocyte differentiation, is required for postnatal maintenance of systemic energy homeostasis and lipid storage. To regulate these different processes at the proper moment and tissue, interplays with other transcription factors and modulators. Down-regulates the expression of genes that maintain cells in an undifferentiated and proliferative state through E2F1 repression, which is critical for its ability to induce adipocyte and granulocyte terminal differentiation. Reciprocally E2F1 blocks adipocyte differentiation by binding to specific promoters and repressing CEBPA binding to its target gene promoters. Proliferation arrest also depends on a functional binding to SWI/SNF complex. In liver, regulates gluconeogenesis and lipogenesis through different mechanisms. To regulate gluconeogenesis, functionally cooperates with FOXO1 binding to IRE-controlled promoters and regulating the expression of target genes such as PCK1 or G6PC1. To modulate lipogenesis, interacts and transcriptionally synergizes with SREBF1 in promoter activation of specific lipogenic target genes such as ACAS2. In adipose tissue, seems to act as FOXO1 coactivator accessing to ADIPOQ promoter through FOXO1 binding sites. Can act as dominant-negative. Binds DNA and have transctivation activity, even if much less efficiently than isoform 2. Does not inhibit cell proliferation. In terms of biological role, directly and specifically enhances ribosomal DNA transcription interacting with RNA polymerase I-specific cofactors and inducing histone acetylation. In Rattus norvegicus (Rat), this protein is CCAAT/enhancer-binding protein alpha.